A 409-amino-acid chain; its full sequence is ATPase ASNA1 homolog (409 aa).

ATP is bound at residue 21-28 (KGGVGKTT). Residue Asp-62 is part of the active site. Glu-303 and Asn-330 together coordinate ATP. Zn(2+) is bound by residues Cys-342 and Cys-345.

This sequence belongs to the arsA ATPase family. As to quaternary structure, homodimer.

Its subcellular location is the cytoplasm. The protein resides in the endoplasmic reticulum. In terms of biological role, ATPase required for the post-translational delivery of tail-anchored (TA) proteins to the endoplasmic reticulum. Recognizes and selectively binds the transmembrane domain of TA proteins in the cytosol. This complex then targets to the endoplasmic reticulum by membrane-bound receptors, where the tail-anchored protein is released for insertion. This process is regulated by ATP binding and hydrolysis. ATP binding drives the homodimer towards the closed dimer state, facilitating recognition of newly synthesized TA membrane proteins. ATP hydrolysis is required for insertion. Subsequently, the homodimer reverts towards the open dimer state, lowering its affinity for the membrane-bound receptor, and returning it to the cytosol to initiate a new round of targeting. This Leishmania major protein is ATPase ASNA1 homolog.